The sequence spans 185 residues: Chromobox protein homolog 1 (185 aa).

Glycyl lysine isopeptide (Lys-Gly) (interchain with G-Cter in SUMO2) cross-links involve residues K9 and K33. Positions 21 to 79 (YVVEKVLDRRVVKGKVEYLLKWKGFSDEDNTWEPEENLDCPDLIAEFLQSQKTAHETDK) constitute a Chromo 1 domain. The segment at 63 to 124 (LIAEFLQSQK…RGLEPERIIG (62 aa)) is disordered. Positions 73-89 (TAHETDKSEGGKRKADS) are enriched in basic and acidic residues. Phosphoserine is present on residues S89 and S91. A compositionally biased stretch (basic and acidic residues) spans 96–121 (EESKPKKKKEESEKPRGFARGLEPER). Residues K99 and K150 each participate in a glycyl lysine isopeptide (Lys-Gly) (interchain with G-Cter in SUMO2) cross-link. Residues 117 to 175 (LEPERIIGATDSSGELMFLMKWKNSDEADLVPAKEANVKCPQVVISFYEERLTWHSYPS) form the Chromo 2; shadow subtype domain. The residue at position 175 (S175) is a Phosphoserine.

In terms of assembly, homodimer. Interacts directly with CHAF1A, EMSY, LBR, TIF1/TIF1A and TRIM28/TIF1B PXVXL motif via the chromoshadow domain. Interacts directly with histone H3 methylated at 'Lys-9' via the chromo domain. Interacts with SUV39H1 and SETDB1, KMT5B and KMT5C. Interacts with PRDM6. Interacts with POGZ. Interacts with CHAMP1. Interacts with INCENP. Interacts with SGO1; the CBX1 homodimer binds to one molecule of SGO1. Interacts with LRIF1 (via PxVxL motif). Interacts with HDGFL2. Interacts with CHD3. Interacts with CHD4. Not phosphorylated. Post-translationally, ubiquitinated. Expressed in all adult and embryonic tissues.

The protein localises to the nucleus. Its function is as follows. Component of heterochromatin. Recognizes and binds histone H3 tails methylated at 'Lys-9', leading to epigenetic repression. Interaction with lamin B receptor (LBR) can contribute to the association of the heterochromatin with the inner nuclear membrane. The chain is Chromobox protein homolog 1 (CBX1) from Homo sapiens (Human).